Consider the following 202-residue polypeptide: Succinate dehydrogenase cytochrome b558 subunit (202 aa).

5 consecutive transmembrane segments (helical) span residues 12–31 (LHSL…HLVV), 60–79 (IFII…YIAF), 93–113 (NWLF…VSWH), 135–155 (ILSS…TIFH), and 178–196 (ISTY…VGLK). Histidine 28, histidine 70, histidine 113, and histidine 155 together coordinate heme.

It belongs to the cytochrome b558 family. In terms of assembly, part of an enzyme complex containing three subunits: a flavoprotein, an iron-sulfur protein and cytochrome b-558.

It localises to the cell membrane. The protein operates within carbohydrate metabolism; tricarboxylic acid cycle. In terms of biological role, di-heme cytochrome of the succinate dehydrogenase complex. The sequence is that of Succinate dehydrogenase cytochrome b558 subunit (sdhC) from Bacillus subtilis (strain 168).